The following is a 288-amino-acid chain: Eukaryotic translation initiation factor 3 subunit F-2 (288 aa).

The 138-residue stretch at 12–149 folds into the MPN domain; sequence VLLHPLVLFQ…TRIFCAVATG (138 aa).

The protein belongs to the eIF-3 subunit F family. Component of the eukaryotic translation initiation factor 3 (eIF-3) complex. The eIF-3 complex interacts with pix.

The protein localises to the cytoplasm. Component of the eukaryotic translation initiation factor 3 (eIF-3) complex, which is involved in protein synthesis of a specialized repertoire of mRNAs and, together with other initiation factors, stimulates binding of mRNA and methionyl-tRNAi to the 40S ribosome. The eIF-3 complex specifically targets and initiates translation of a subset of mRNAs involved in cell proliferation. The polypeptide is Eukaryotic translation initiation factor 3 subunit F-2 (Drosophila pseudoobscura pseudoobscura (Fruit fly)).